The sequence spans 221 residues: Pectate lyase C (221 aa).

Positions 1–27 (MKKIVSILFMFGLVMGFSQFQPSTVFA) are cleaved as a signal peptide.

It belongs to the polysaccharide lyase 3 family. Ca(2+) serves as cofactor.

Its subcellular location is the secreted. The enzyme catalyses Eliminative cleavage of (1-&gt;4)-alpha-D-galacturonan to give oligosaccharides with 4-deoxy-alpha-D-galact-4-enuronosyl groups at their non-reducing ends.. It carries out the reaction Eliminative cleavage of (1-&gt;4)-alpha-D-galacturonan methyl ester to give oligosaccharides with 4-deoxy-6-O-methyl-alpha-D-galact-4-enuronosyl groups at their non-reducing ends.. The protein operates within glycan metabolism; pectin degradation; 2-dehydro-3-deoxy-D-gluconate from pectin: step 2/5. Its function is as follows. Catalyzes the depolymerization of both polygalacturonate and pectins of methyl esterification degree from 22 to 89%, with an endo mode of action. In contrast to the majority of pectate lyases, displays high activity on highly methylated pectins. Is also able to cleave trigalacturonate to galacturonic acid and unsaturated digalacturonate. The sequence is that of Pectate lyase C (pelC) from Bacillus subtilis (strain 168).